The following is a 351-amino-acid chain: MKFLDQCKIYLKSGDGGPGAVAFRREKFIEFGGPDGGNGGRGGDVIIEAVDGLNTLIDYRYQQHFKAKRGGHGMGRSRSGAKGEDAVLRVPVGTQVLDDDQETVLADMTEVGQRIVLLKGGDGGFGNEHYKSSTNRAPRQFTPGWPGEERWVWLRLKLIADAGLVGLPNAGKSTFLAAVSRARPKIADYPFTTLTPNLGVVQAGEEEFVLADIPGLIEGAHEGRGIGTRFLGHVERTRVLLHLVDGTQEDVQLAYRTIRRELRLYGGGLAEKPEIVALNKIDALTPEELEFKRTKLRRSAKKPVMLLSGATGQGVQEMLFELLRHIREARGAEAEAAEEIERRIRYAPIEE.

The 159-residue stretch at 1–159 folds into the Obg domain; the sequence is MKFLDQCKIY…RWVWLRLKLI (159 aa). Positions 160-327 constitute an OBG-type G domain; sequence ADAGLVGLPN…MLFELLRHIR (168 aa). GTP contacts are provided by residues 166–173, 191–195, 212–215, 279–282, and 308–310; these read GLPNAGKS, FTTLT, DIPG, NKID, and SGA. Residues S173 and T193 each contribute to the Mg(2+) site.

It belongs to the TRAFAC class OBG-HflX-like GTPase superfamily. OBG GTPase family. In terms of assembly, monomer. Mg(2+) is required as a cofactor.

Its subcellular location is the cytoplasm. In terms of biological role, an essential GTPase which binds GTP, GDP and possibly (p)ppGpp with moderate affinity, with high nucleotide exchange rates and a fairly low GTP hydrolysis rate. Plays a role in control of the cell cycle, stress response, ribosome biogenesis and in those bacteria that undergo differentiation, in morphogenesis control. This chain is GTPase Obg, found in Rhodospirillum centenum (strain ATCC 51521 / SW).